A 312-amino-acid polypeptide reads, in one-letter code: Molybdenum cofactor biosynthesis bifunctional protein (312 aa).

The interval 1-155 (MEFTHLDENG…GGKSSAAEYH (155 aa)) is molybdenum cofactor biosynthesis protein C. Substrate-binding positions include 74-76 (LCH) and 110-111 (ME). Asp125 is an active-site residue. The molybdenum cofactor biosynthesis protein B stretch occupies residues 156–312 (PRTAILVMSD…FPMLKGDGHA (157 aa)).

It in the N-terminal section; belongs to the MoaC family. In the C-terminal section; belongs to the MoaB/Mog family.

It carries out the reaction (8S)-3',8-cyclo-7,8-dihydroguanosine 5'-triphosphate = cyclic pyranopterin phosphate + diphosphate. The protein operates within cofactor biosynthesis; molybdopterin biosynthesis. Its function is as follows. Catalyzes the conversion of (8S)-3',8-cyclo-7,8-dihydroguanosine 5'-triphosphate to cyclic pyranopterin monophosphate (cPMP). In Chlorobaculum tepidum (strain ATCC 49652 / DSM 12025 / NBRC 103806 / TLS) (Chlorobium tepidum), this protein is Molybdenum cofactor biosynthesis bifunctional protein (moaCB).